Consider the following 86-residue polypeptide: Small ribosomal subunit protein bS18 (86 aa).

The protein belongs to the bacterial ribosomal protein bS18 family. As to quaternary structure, part of the 30S ribosomal subunit. Forms a tight heterodimer with protein bS6.

In terms of biological role, binds as a heterodimer with protein bS6 to the central domain of the 16S rRNA, where it helps stabilize the platform of the 30S subunit. This Herpetosiphon aurantiacus (strain ATCC 23779 / DSM 785 / 114-95) protein is Small ribosomal subunit protein bS18.